Here is a 121-residue protein sequence, read N- to C-terminus: Nitrogen fixation nifHD region GlnB-like protein 2 (121 aa).

The protein belongs to the P(II) protein family.

In terms of biological role, could be involved in the regulation of nitrogen fixation. This Methanothermobacter marburgensis (strain ATCC BAA-927 / DSM 2133 / JCM 14651 / NBRC 100331 / OCM 82 / Marburg) (Methanobacterium thermoautotrophicum) protein is Nitrogen fixation nifHD region GlnB-like protein 2 (glnBB).